We begin with the raw amino-acid sequence, 1104 residues long: Inhibitory regulator protein BUD2/CLA2 (1104 aa).

Residue Ser-2 is modified to N-acetylserine. Residues 316–444 (RSEYLSITGS…RYNKETRLPI (129 aa)) enclose the C2 domain. Residues 536–753 (AKIDGTVSRI…NDLLDYIDKM (218 aa)) enclose the Ras-GAP domain. Ser-854 is modified (phosphoserine). The tract at residues 1027-1104 (NPKSSNKTSV…FKKKKETGGS (78 aa)) is disordered. Polar residues-rich tracts occupy residues 1029–1043 (KSSNKTSVHGTSSEN) and 1052–1069 (LPNSQGKGNLGNRFSPTK). The segment covering 1090–1104 (KLTRWFKKKKETGGS) has biased composition (basic residues).

Its function is as follows. Stimulates the GTPase activity of BUD1/RSR1. Participates in the regulation of bud-site selection. In Saccharomyces cerevisiae (strain ATCC 204508 / S288c) (Baker's yeast), this protein is Inhibitory regulator protein BUD2/CLA2 (BUD2).